The chain runs to 509 residues: 3-isopropylmalate dehydratase large subunit, chloroplastic (509 aa).

Positions 1–24 (MASVISSSPFLCKSSSKSDLGISS) are enriched in low complexity. Residues 1-25 (MASVISSSPFLCKSSSKSDLGISSF) form a disordered region. Residues 1-47 (MASVISSSPFLCKSSSKSDLGISSFPKSSQISIHRCQKKSISRKIVS) constitute a chloroplast transit peptide. 3 residues coordinate [4Fe-4S] cluster: C376, C445, and C448.

This sequence belongs to the aconitase/IPM isomerase family. In terms of assembly, heterodimer of the large LEUC/IIL1 subunit and the small LEUD (SSU1, SSU2 or SSU3) subunits. The cofactor is [4Fe-4S] cluster. Expressed in roots, leaves, stems and flowers. Expressed at low levels in siliques.

The protein localises to the plastid. Its subcellular location is the chloroplast stroma. The catalysed reaction is (2R,3S)-3-isopropylmalate = (2S)-2-isopropylmalate. It carries out the reaction a 2-(omega-methylsulfanyl)alkylmalate = a 2-(omega-methylsulfanyl)alkylmaleate + H2O. It catalyses the reaction 2-(3-methylsulfanyl)propylmalate = 2-(2-methylsulfanyl)propylmaleate + H2O. The enzyme catalyses a 3-(omega-methylsulfanyl)alkylmalate = a 2-(omega-methylsulfanyl)alkylmaleate + H2O. The catalysed reaction is 2-(2-methylsulfanyl)ethylmalate = 2-(2-methylsulfanyl)ethylmaleate + H2O. It carries out the reaction 3-(2-methylsulfanyl)ethylmalate = 2-(2-methylsulfanyl)ethylmaleate + H2O. It catalyses the reaction 3-(3-methylsulfanyl)propylmalate = 2-(2-methylsulfanyl)propylmaleate + H2O. The protein operates within amino-acid biosynthesis; L-leucine biosynthesis; L-leucine from 3-methyl-2-oxobutanoate: step 2/4. In terms of biological role, catalyzes the isomerization between 2-isopropylmalate and 3-isopropylmalate, via the formation of 2-isopropylmaleate. Functions in both the biosynthesis of leucine and in the methionine chain elongation pathway of aliphatic glucosinolate formation. The protein is 3-isopropylmalate dehydratase large subunit, chloroplastic of Arabidopsis thaliana (Mouse-ear cress).